A 321-amino-acid polypeptide reads, in one-letter code: Cytochrome f (321 aa).

A signal peptide spans 1 to 35 (MQNRNKNNWMKKWVIRSISILIILNIIAWPSISYA). Heme contacts are provided by Tyr-36, Cys-56, Cys-59, and His-60. Residues 287–306 (IQGLLLFFVSVIMAQILLVL) traverse the membrane as a helical segment.

Belongs to the cytochrome f family. In terms of assembly, the 4 large subunits of the cytochrome b6-f complex are cytochrome b6, subunit IV (17 kDa polypeptide, petD), cytochrome f and the Rieske protein, while the 4 small subunits are PetG, PetL, PetM and PetN. The complex functions as a dimer. Heme serves as cofactor.

It localises to the plastid. The protein localises to the chloroplast thylakoid membrane. Component of the cytochrome b6-f complex, which mediates electron transfer between photosystem II (PSII) and photosystem I (PSI), cyclic electron flow around PSI, and state transitions. The chain is Cytochrome f from Psilotum nudum (Whisk fern).